The primary structure comprises 114 residues: UPF0145 protein PYRAB04900 (114 aa).

This sequence belongs to the UPF0145 family.

The chain is UPF0145 protein PYRAB04900 from Pyrococcus abyssi (strain GE5 / Orsay).